We begin with the raw amino-acid sequence, 237 residues long: Phosphoribosylaminoimidazole-succinocarboxamide synthase (237 aa).

Belongs to the SAICAR synthetase family.

The enzyme catalyses 5-amino-1-(5-phospho-D-ribosyl)imidazole-4-carboxylate + L-aspartate + ATP = (2S)-2-[5-amino-1-(5-phospho-beta-D-ribosyl)imidazole-4-carboxamido]succinate + ADP + phosphate + 2 H(+). Its pathway is purine metabolism; IMP biosynthesis via de novo pathway; 5-amino-1-(5-phospho-D-ribosyl)imidazole-4-carboxamide from 5-amino-1-(5-phospho-D-ribosyl)imidazole-4-carboxylate: step 1/2. The polypeptide is Phosphoribosylaminoimidazole-succinocarboxamide synthase (Idiomarina loihiensis (strain ATCC BAA-735 / DSM 15497 / L2-TR)).